The following is an 881-amino-acid chain: Putative outer membrane usher protein YfcU (881 aa).

An N-terminal signal peptide occupies residues 1–29 (MPDHSLFRLRILPWCIALAMSGSYSSVWA).

This sequence belongs to the fimbrial export usher family.

The protein localises to the cell outer membrane. In terms of biological role, part of the yfcOPQRSUV fimbrial operon. Could contribute to adhesion to various surfaces in specific environmental niches. Increases adhesion to eukaryotic T24 bladder epithelial cells in the absence of fim genes. Probably involved in the export and assembly of fimbrial subunits across the outer membrane. The sequence is that of Putative outer membrane usher protein YfcU (yfcU) from Escherichia coli (strain K12).